We begin with the raw amino-acid sequence, 548 residues long: Chaperonin GroEL (548 aa).

ATP is bound by residues 30–33, lysine 51, 87–91, glycine 415, 479–481, and aspartate 495; these read TLGP, DGTTT, and NAA.

This sequence belongs to the chaperonin (HSP60) family. Forms a cylinder of 14 subunits composed of two heptameric rings stacked back-to-back. Interacts with the co-chaperonin GroES. Post-translationally, UMPylated on a tyrosine residue by YdiU under ATP-limited conditions.

Its subcellular location is the cytoplasm. It catalyses the reaction ATP + H2O + a folded polypeptide = ADP + phosphate + an unfolded polypeptide.. With respect to regulation, UMPylation of the chaperone by YdiU negatively regulates its activity, facilitating Salmonella survival under ATP-limited conditions. In terms of biological role, together with its co-chaperonin GroES, plays an essential role in assisting protein folding. The GroEL-GroES system forms a nano-cage that allows encapsulation of the non-native substrate proteins and provides a physical environment optimized to promote and accelerate protein folding. In Salmonella typhimurium (strain LT2 / SGSC1412 / ATCC 700720), this protein is Chaperonin GroEL.